We begin with the raw amino-acid sequence, 470 residues long: Nuclear receptor subfamily 0 group B member 1 (470 aa).

Repeat copies occupy residues 1–67 (MAGE…YRCC), 68–133 (FCGK…YRCC), and 134–200 (FCGE…YRCC). A 4 X 67 AA tandem repeats region spans residues 1 to 253 (MAGENHQWQG…RPVALKSPQV (253 aa)). Short sequence motifs (LXXLL motif) lie at residues 13 to 17 (LYNML), 80 to 84 (LYSML), and 146 to 150 (LYSLL). The 4; truncated repeat unit spans residues 201 to 253 (FCGEDHPQQGSTLYCMPTSTNQAQAAPEERPRAPWWDTSSGALRPVALKSPQV). Residues 205 to 469 (DHPQQGSTLY…DMMLEMLCTK (265 aa)) form the NR LBD domain. Positions 461–466 (MMLEML) match the AF-2 motif motif.

Belongs to the nuclear hormone receptor family. NR0 subfamily. In terms of assembly, homodimer. Interacts with NR5A1, NR5A2, NR0B2 and with COPS2. Interacts with ESRRB; represses ESRRB activity at the GATA6 promoter.

It localises to the nucleus. The protein localises to the cytoplasm. In terms of biological role, nuclear receptor that lacks a DNA-binding domain and acts as a corepressor that inhibits the transcriptional activity of other nuclear receptors through heterodimeric interactions. Component of a cascade required for the development of the hypothalamic-pituitary-adrenal-gonadal axis. May also have a role in the development of the embryo and in the maintenance of embryonic stem cell pluripotency. The polypeptide is Nuclear receptor subfamily 0 group B member 1 (NR0B1) (Pan troglodytes (Chimpanzee)).